The sequence spans 147 residues: MRLMGLDVGSKTVGISVSDPLGWTAQAVEIIPIDEENEIFGIDRVAELVKKEQVAGFVIGLPKNMNNTEGPRVEASQHYGKLLQQRFPDIPIDFQDERLTTVEAHRMLVEEADISRAKQKKVIDEVAATFILQSYLDRHGRLVNKLK.

The protein belongs to the YqgF nuclease family.

Its subcellular location is the cytoplasm. Its function is as follows. Could be a nuclease involved in processing of the 5'-end of pre-16S rRNA. This Limosilactobacillus reuteri (strain DSM 20016) (Lactobacillus reuteri) protein is Putative pre-16S rRNA nuclease.